A 378-amino-acid polypeptide reads, in one-letter code: H repeat-associated putative transposase YhhI (378 aa).

It belongs to the transposase 11 family.

This Escherichia coli (strain K12) protein is H repeat-associated putative transposase YhhI (yhhI).